A 250-amino-acid polypeptide reads, in one-letter code: Probable replication-associated protein repA2 (250 aa).

The protein belongs to the IncFII RepA family.

This protein is essential for plasmid replication; it is involved in copy control functions. This is Probable replication-associated protein repA2 (repA2) from Buchnera aphidicola subsp. Acyrthosiphon pisum (strain APS) (Acyrthosiphon pisum symbiotic bacterium).